A 128-amino-acid polypeptide reads, in one-letter code: Large ribosomal subunit protein bL12 (128 aa).

It belongs to the bacterial ribosomal protein bL12 family. In terms of assembly, homodimer. Part of the ribosomal stalk of the 50S ribosomal subunit. Forms a multimeric L10(L12)X complex, where L10 forms an elongated spine to which 2 to 4 L12 dimers bind in a sequential fashion. Binds GTP-bound translation factors.

Forms part of the ribosomal stalk which helps the ribosome interact with GTP-bound translation factors. Is thus essential for accurate translation. In Phenylobacterium zucineum (strain HLK1), this protein is Large ribosomal subunit protein bL12.